Consider the following 364-residue polypeptide: S-adenosylmethionine:tRNA ribosyltransferase-isomerase (364 aa).

The segment at 344-364 (ASDKMQETSGRGERPRFDHEI) is disordered.

The protein belongs to the QueA family. As to quaternary structure, monomer.

The protein resides in the cytoplasm. The catalysed reaction is 7-aminomethyl-7-carbaguanosine(34) in tRNA + S-adenosyl-L-methionine = epoxyqueuosine(34) in tRNA + adenine + L-methionine + 2 H(+). Its pathway is tRNA modification; tRNA-queuosine biosynthesis. Functionally, transfers and isomerizes the ribose moiety from AdoMet to the 7-aminomethyl group of 7-deazaguanine (preQ1-tRNA) to give epoxyqueuosine (oQ-tRNA). This is S-adenosylmethionine:tRNA ribosyltransferase-isomerase from Thioalkalivibrio sulfidiphilus (strain HL-EbGR7).